The primary structure comprises 79 residues: Beta-defensin 15 (79 aa).

An N-terminal signal peptide occupies residues 1–20; it reads MKTFLFLFAVFFFLDPAKNA. 3 cysteine pairs are disulfide-bonded: Cys26-Cys53, Cys33-Cys47, and Cys37-Cys54.

The protein belongs to the beta-defensin family.

It is found in the secreted. Functionally, has antibacterial activity. In Rattus norvegicus (Rat), this protein is Beta-defensin 15 (Defb15).